Reading from the N-terminus, the 208-residue chain is Holliday junction branch migration complex subunit RuvA (208 aa).

Positions 1 to 63 (MIGMLTGRVE…QDAITLHGFL (63 aa)) are domain I. The segment at 64-142 (DRDAKKTFLQ…LSQIEGASAQ (79 aa)) is domain II. Residues 143–151 (AATSKSPVD) are flexible linker. The domain III stretch occupies residues 151–208 (DTGTEQVVEGLISLGWRQQDAQQAVAEACAENDIPTPLATDDVPRVLRLALALMDRGR).

This sequence belongs to the RuvA family. Homotetramer. Forms an RuvA(8)-RuvB(12)-Holliday junction (HJ) complex. HJ DNA is sandwiched between 2 RuvA tetramers; dsDNA enters through RuvA and exits via RuvB. An RuvB hexamer assembles on each DNA strand where it exits the tetramer. Each RuvB hexamer is contacted by two RuvA subunits (via domain III) on 2 adjacent RuvB subunits; this complex drives branch migration. In the full resolvosome a probable DNA-RuvA(4)-RuvB(12)-RuvC(2) complex forms which resolves the HJ.

Its subcellular location is the cytoplasm. The RuvA-RuvB-RuvC complex processes Holliday junction (HJ) DNA during genetic recombination and DNA repair, while the RuvA-RuvB complex plays an important role in the rescue of blocked DNA replication forks via replication fork reversal (RFR). RuvA specifically binds to HJ cruciform DNA, conferring on it an open structure. The RuvB hexamer acts as an ATP-dependent pump, pulling dsDNA into and through the RuvAB complex. HJ branch migration allows RuvC to scan DNA until it finds its consensus sequence, where it cleaves and resolves the cruciform DNA. The sequence is that of Holliday junction branch migration complex subunit RuvA from Bifidobacterium longum (strain DJO10A).